Consider the following 504-residue polypeptide: MADINPRQSDTSKFPDPVYKETVLRPLFDGAKNHHVDGFRRIDRAHLVMLRETGILDAETAAKIAGALEDIDRTIEPSELVYTGEVEDFFFLIEKELKARIGVDVAGRLHTARSRNDIDHTLFKIGLKDKIDTLTAKARVLLKALIDAAERNQSTLIVAYTHGQPAQPTTFGHYLSAAIEVLIRDIERFTEARHIVDLSPMGAAAITTSGFPIDRARVAELLGFAAPLRNSYSCIAAVDYTTATYGAIELMFLHLGRLIQDFQFWTSFEVGQIYVPNSLVQISSIMPQKRNPVPIEHLRHLASQTFGRARTMLDVMHNTPFTDMNDSEGETQSMGYEAFASAGRVLDLLASLVGQISIDPERVDQNIRRSCITITELADSLVRIEDLSFRQAHEIAATVAKSVVALKGDLPNDGYQPFLGAFSGLTGRETGIDEEKFRQIVSPEHFVAVRSRFGGPAPEPMREAFAAYRGKLGAFEAEAQRSTNHEAAKAAELAEKFTALTGAR.

This sequence belongs to the lyase 1 family. Argininosuccinate lyase subfamily.

It is found in the cytoplasm. The catalysed reaction is 2-(N(omega)-L-arginino)succinate = fumarate + L-arginine. It functions in the pathway amino-acid biosynthesis; L-arginine biosynthesis; L-arginine from L-ornithine and carbamoyl phosphate: step 3/3. The protein is Argininosuccinate lyase 2 of Agrobacterium fabrum (strain C58 / ATCC 33970) (Agrobacterium tumefaciens (strain C58)).